The primary structure comprises 331 residues: Probable zinc-binding oxidoreductase, mitochondrial (331 aa).

Residues 1–29 (MASVTSVPKTGRSVNQDVPATTLTLQTRP) are compositionally biased toward polar residues. Residues 1-34 (MASVTSVPKTGRSVNQDVPATTLTLQTRPTPAPN) form a disordered region.

The protein belongs to the zinc-containing alcohol dehydrogenase family. Quinone oxidoreductase subfamily.

The protein localises to the mitochondrion. This is Probable zinc-binding oxidoreductase, mitochondrial from Arthroderma benhamiae (strain ATCC MYA-4681 / CBS 112371) (Trichophyton mentagrophytes).